The primary structure comprises 393 residues: D-alanyl-D-alanine carboxypeptidase DacA (393 aa).

The first 18 residues, 1-18, serve as a signal peptide directing secretion; that stretch reads MLKRTTKIAFLSSFVALS. The Acyl-ester intermediate role is filled by serine 65. Residue lysine 68 is the Proton acceptor of the active site. Serine 128 is a catalytic residue. A substrate-binding site is contributed by lysine 231.

The protein belongs to the peptidase S11 family.

It localises to the cell inner membrane. It carries out the reaction Preferential cleavage: (Ac)2-L-Lys-D-Ala-|-D-Ala. Also transpeptidation of peptidyl-alanyl moieties that are N-acyl substituents of D-alanine.. It participates in cell wall biogenesis; peptidoglycan biosynthesis. Its function is as follows. Removes C-terminal D-alanyl residues from sugar-peptide cell wall precursors. The chain is D-alanyl-D-alanine carboxypeptidase DacA (dacA) from Haemophilus influenzae (strain ATCC 51907 / DSM 11121 / KW20 / Rd).